Reading from the N-terminus, the 95-residue chain is Protein J1 homolog (95 aa).

This sequence belongs to the chordopoxvirinae J1 family. In terms of assembly, homodimer. Part of a complex composed of A30, G7, F10 kinase, A15, D2, D3, and J1. Interacts with A45.

The protein resides in the virion. It localises to the host cytoplasm. Its function is as follows. Late protein which is a part of a large complex required for early virion morphogenesis. This complex participates in the formation of virosomes and the incorporation of virosomal contents into nascent immature virions. J1 protein is required for DNA packaging during immature virions (IV) formation. The protein is Protein J1 homolog of Sus scrofa (Pig).